The chain runs to 54 residues: UPF0391 membrane protein Bpro_0879 (54 aa).

Helical transmembrane passes span 6-26 and 30-50; these read VVFL…IAAG and IAKI…VMGL.

This sequence belongs to the UPF0391 family.

It is found in the cell membrane. In Polaromonas sp. (strain JS666 / ATCC BAA-500), this protein is UPF0391 membrane protein Bpro_0879.